The sequence spans 237 residues: Phosphatidylserine decarboxylase proenzyme (237 aa).

Ser-206 (schiff-base intermediate with substrate; via pyruvic acid) is an active-site residue. Ser-206 is modified (pyruvic acid (Ser); by autocatalysis).

The protein belongs to the phosphatidylserine decarboxylase family. PSD-A subfamily. Heterodimer of a large membrane-associated beta subunit and a small pyruvoyl-containing alpha subunit. Requires pyruvate as cofactor. Post-translationally, is synthesized initially as an inactive proenzyme. Formation of the active enzyme involves a self-maturation process in which the active site pyruvoyl group is generated from an internal serine residue via an autocatalytic post-translational modification. Two non-identical subunits are generated from the proenzyme in this reaction, and the pyruvate is formed at the N-terminus of the alpha chain, which is derived from the carboxyl end of the proenzyme. The post-translation cleavage follows an unusual pathway, termed non-hydrolytic serinolysis, in which the side chain hydroxyl group of the serine supplies its oxygen atom to form the C-terminus of the beta chain, while the remainder of the serine residue undergoes an oxidative deamination to produce ammonia and the pyruvoyl prosthetic group on the alpha chain.

Its subcellular location is the cell membrane. The catalysed reaction is a 1,2-diacyl-sn-glycero-3-phospho-L-serine + H(+) = a 1,2-diacyl-sn-glycero-3-phosphoethanolamine + CO2. It functions in the pathway phospholipid metabolism; phosphatidylethanolamine biosynthesis; phosphatidylethanolamine from CDP-diacylglycerol: step 2/2. Functionally, catalyzes the formation of phosphatidylethanolamine (PtdEtn) from phosphatidylserine (PtdSer). In Nocardia farcinica (strain IFM 10152), this protein is Phosphatidylserine decarboxylase proenzyme.